A 344-amino-acid chain; its full sequence is Serine proteinase inhibitor 2 (344 aa).

This sequence belongs to the serpin family. Poxviruses subfamily.

The protein localises to the host cytoplasm. Viral serpin that inhibits both cysteine and serine proteinases involved in the regulation of host inflammatory and apoptosis processes. Major anti-apoptotic protein which inhibits both intrinsic and extrinsic pathways and strongly cleaves host CASP1 and CASP8 but is a rather poor inhibitor of host CASP3. Prevents the proteolytic activity of host interleukin-1-beta converting enzyme (ICE) and ICE-like enzymes. Can also block apoptosis through host tumor necrosis factor (TNF) receptor. The inhibition of host ICE is an example of a 'cross-class' interaction, in which a serpin inhibits a non-serine proteinase. Also inhibits granzyme B. In Cynomys gunnisoni (Gunnison's prairie dog), this protein is Serine proteinase inhibitor 2 (OPG199).